The following is a 349-amino-acid chain: N-acetyltaurine hydrolase (349 aa).

The a divalent metal cation site is built by His26, His28, Glu169, His201, His230, and Asp298.

Belongs to the metallo-dependent hydrolases superfamily. Phosphotriesterase family. Requires a divalent metal cation as cofactor.

It localises to the cytoplasm. The protein localises to the cytosol. It catalyses the reaction N-acetyltaurine + H2O = taurine + acetate. The enzyme catalyses N-propanoyltaurine + H2O = propanoate + taurine. It carries out the reaction N-acetyl-L-methionine + H2O = L-methionine + acetate. The catalysed reaction is N-acetyl-L-isoleucine + H2O = L-isoleucine + acetate. It catalyses the reaction N-acetyl-L-leucine + H2O = L-leucine + acetate. The enzyme catalyses N-acetyl-L-valine + H2O = L-valine + acetate. Functionally, N-acetyltaurine hydrolase that regulates feeding by catalyzing the hydrolysis of N-acetyltaurine into taurine and acetate. N-acetyltaurine has anorexigenic and anti-obesity effects that are dependent on GFRAL receptor and GDF15. PTER also acts on other N-acetyl amino acids (Met, Ile, Leu, Val) and N-propionyltaurine, but at lower rates. The sequence is that of N-acetyltaurine hydrolase from Pongo abelii (Sumatran orangutan).